The primary structure comprises 395 residues: Multidrug resistance protein MdtL (395 aa).

Helical transmembrane passes span 4-24 (FLLCSFALVLLYPAGIDMYLV), 42-62 (IAFSVYLAGMATAMLFAGKIA), 69-89 (PVAIVGAIVFMMASLLCSRAS), 93-113 (LFLSGRFLQGIGAGGCYVVAF), 131-151 (LLNGITCIVPVLAPVVGHLIM), 158-178 (SLFYTMSAMGIIVGLLSLFIL), 217-237 (VSVILTFVNASPVLLMEVMGF), 247-267 (ALTAGVSMVVSFSTPFALGLF), 271-291 (TLMLVSQGLFLTAGVTLSLAH), 295-315 (VTLFGLTLICAGFSVGFGVAM), 328-350 (VASSTLGIAQVCGSSLWIWLAAI), and 355-377 (AMNMLIGILIGCSIVSILLIFSV).

Belongs to the major facilitator superfamily. DHA1 family. MdtL (TC 2.A.1.2.22) subfamily.

It is found in the cell inner membrane. The polypeptide is Multidrug resistance protein MdtL (Salmonella dublin (strain CT_02021853)).